Consider the following 470-residue polypeptide: Serine--tRNA ligase (470 aa).

Residue 272–274 participates in L-serine binding; that stretch reads TAE. Residue 303–305 participates in ATP binding; sequence RAE. E326 contributes to the L-serine binding site. Position 393–396 (393–396) interacts with ATP; that stretch reads EISS. S428 serves as a coordination point for L-serine.

This sequence belongs to the class-II aminoacyl-tRNA synthetase family. Type-1 seryl-tRNA synthetase subfamily. In terms of assembly, homodimer. The tRNA molecule binds across the dimer.

It localises to the cytoplasm. It carries out the reaction tRNA(Ser) + L-serine + ATP = L-seryl-tRNA(Ser) + AMP + diphosphate + H(+). The catalysed reaction is tRNA(Sec) + L-serine + ATP = L-seryl-tRNA(Sec) + AMP + diphosphate + H(+). It functions in the pathway aminoacyl-tRNA biosynthesis; selenocysteinyl-tRNA(Sec) biosynthesis; L-seryl-tRNA(Sec) from L-serine and tRNA(Sec): step 1/1. Catalyzes the attachment of serine to tRNA(Ser). Is also able to aminoacylate tRNA(Sec) with serine, to form the misacylated tRNA L-seryl-tRNA(Sec), which will be further converted into selenocysteinyl-tRNA(Sec). This chain is Serine--tRNA ligase, found in Nitrobacter hamburgensis (strain DSM 10229 / NCIMB 13809 / X14).